A 338-amino-acid chain; its full sequence is GTPase Obg (338 aa).

The region spanning 1–159 (MSFIDEVKIH…RWLRLELKLM (159 aa)) is the Obg domain. The 172-residue stretch at 160–331 (ADVGLLGMPS…LLDEIARQLW (172 aa)) folds into the OBG-type G domain. GTP-binding positions include 166–173 (GMPSVGKS), 191–195 (FTTLK), 213–216 (DIPG), 283–286 (NKMD), and 312–314 (SAA). Residues Ser173 and Thr193 each coordinate Mg(2+).

It belongs to the TRAFAC class OBG-HflX-like GTPase superfamily. OBG GTPase family. In terms of assembly, monomer. It depends on Mg(2+) as a cofactor.

It localises to the cytoplasm. An essential GTPase which binds GTP, GDP and possibly (p)ppGpp with moderate affinity, with high nucleotide exchange rates and a fairly low GTP hydrolysis rate. Plays a role in control of the cell cycle, stress response, ribosome biogenesis and in those bacteria that undergo differentiation, in morphogenesis control. The sequence is that of GTPase Obg from Geotalea daltonii (strain DSM 22248 / JCM 15807 / FRC-32) (Geobacter daltonii).